Reading from the N-terminus, the 231-residue chain is Large ribosomal subunit protein uL1 (231 aa).

It belongs to the universal ribosomal protein uL1 family. As to quaternary structure, part of the 50S ribosomal subunit.

In terms of biological role, binds directly to 23S rRNA. The L1 stalk is quite mobile in the ribosome, and is involved in E site tRNA release. Protein L1 is also a translational repressor protein, it controls the translation of the L11 operon by binding to its mRNA. This is Large ribosomal subunit protein uL1 from Caldanaerobacter subterraneus subsp. tengcongensis (strain DSM 15242 / JCM 11007 / NBRC 100824 / MB4) (Thermoanaerobacter tengcongensis).